The chain runs to 666 residues: DNA ligase (666 aa).

NAD(+)-binding positions include 34–38, 83–84, and Glu-114; these read DAEYD and SL. The active-site N6-AMP-lysine intermediate is the Lys-116. Residues Arg-137, Glu-171, Lys-286, and Lys-310 each contribute to the NAD(+) site. Residues Cys-404, Cys-407, Cys-422, and Cys-427 each coordinate Zn(2+). Positions 588-666 constitute a BRCT domain; the sequence is NTESTISEKS…EEFFAILKGE (79 aa).

It belongs to the NAD-dependent DNA ligase family. LigA subfamily. Requires Mg(2+) as cofactor. Mn(2+) is required as a cofactor.

It carries out the reaction NAD(+) + (deoxyribonucleotide)n-3'-hydroxyl + 5'-phospho-(deoxyribonucleotide)m = (deoxyribonucleotide)n+m + AMP + beta-nicotinamide D-nucleotide.. Its function is as follows. DNA ligase that catalyzes the formation of phosphodiester linkages between 5'-phosphoryl and 3'-hydroxyl groups in double-stranded DNA using NAD as a coenzyme and as the energy source for the reaction. It is essential for DNA replication and repair of damaged DNA. The sequence is that of DNA ligase from Mesoplasma florum (strain ATCC 33453 / NBRC 100688 / NCTC 11704 / L1) (Acholeplasma florum).